Here is a 216-residue protein sequence, read N- to C-terminus: Ribosome maturation factor RimP (216 aa).

The protein belongs to the RimP family.

Its subcellular location is the cytoplasm. Required for maturation of 30S ribosomal subunits. This chain is Ribosome maturation factor RimP, found in Bartonella henselae (strain ATCC 49882 / DSM 28221 / CCUG 30454 / Houston 1) (Rochalimaea henselae).